A 113-amino-acid chain; its full sequence is Transmembrane protein 256 (113 aa).

The signal sequence occupies residues 1-29 (MAGVGAAFRRLGALSGAGALGLASYGAHG). The Extracellular segment spans residues 30-63 (AQFPDAYGKELFDKANKHHFLHSLALLGVPSCRK). The residue at position 43 (Lys-43) is an N6-acetyllysine. The helical transmembrane segment at 64 to 84 (PVWAGLLLASGTTLFCTSFYY) threads the bilayer. The Cytoplasmic portion of the chain corresponds to 85–92 (QALSGDTS). A helical membrane pass occupies residues 93 to 113 (IQTLGPVGGSLLILGWLALAF).

It belongs to the TMEM256 family.

The protein localises to the membrane. This is Transmembrane protein 256 (Tmem256) from Mus musculus (Mouse).